We begin with the raw amino-acid sequence, 221 residues long: Ribonuclease T (221 aa).

The Exonuclease domain occupies 20–196 (VVVDLETGGF…YDTERTAELF (177 aa)). The Mg(2+) site is built by Asp-23, Glu-25, His-183, and Asp-188. The active-site Proton donor/acceptor is His-183.

Belongs to the RNase T family. As to quaternary structure, homodimer. Mg(2+) serves as cofactor.

Its function is as follows. Trims short 3' overhangs of a variety of RNA species, leaving a one or two nucleotide 3' overhang. Responsible for the end-turnover of tRNA: specifically removes the terminal AMP residue from uncharged tRNA (tRNA-C-C-A). Also appears to be involved in tRNA biosynthesis. The protein is Ribonuclease T of Chromohalobacter salexigens (strain ATCC BAA-138 / DSM 3043 / CIP 106854 / NCIMB 13768 / 1H11).